The chain runs to 278 residues: DNA repair protein RecO (278 aa).

A compositionally biased stretch (polar residues) spans 1–12 (MGTNDALTSTED). The tract at residues 1 to 42 (MGTNDALTSTEDAVTAGANDAPLPAPPEPPRKARRATSRTSD) is disordered.

This sequence belongs to the RecO family.

Its function is as follows. Involved in DNA repair and RecF pathway recombination. This is DNA repair protein RecO from Burkholderia lata (strain ATCC 17760 / DSM 23089 / LMG 22485 / NCIMB 9086 / R18194 / 383).